We begin with the raw amino-acid sequence, 376 residues long: ATP phosphoribosyltransferase regulatory subunit (376 aa).

The protein belongs to the class-II aminoacyl-tRNA synthetase family. HisZ subfamily. As to quaternary structure, heteromultimer composed of HisG and HisZ subunits.

It localises to the cytoplasm. The protein operates within amino-acid biosynthesis; L-histidine biosynthesis; L-histidine from 5-phospho-alpha-D-ribose 1-diphosphate: step 1/9. Functionally, required for the first step of histidine biosynthesis. May allow the feedback regulation of ATP phosphoribosyltransferase activity by histidine. This is ATP phosphoribosyltransferase regulatory subunit from Brucella ovis (strain ATCC 25840 / 63/290 / NCTC 10512).